The primary structure comprises 77 residues: Small nuclear ribonucleoprotein G (77 aa).

One can recognise a Sm domain in the interval 4–76; that stretch reads AGAPDLKKYL…VIMIETLDKM (73 aa).

The protein belongs to the snRNP Sm proteins family. In terms of assembly, belongs to the 40S cdc5-associated complex (or cwf complex), a spliceosome sub-complex reminiscent of a late-stage spliceosome composed of the U2, U5 and U6 snRNAs and at least brr2, cdc5, cwf2/prp3, cwf3/syf1, cwf4/syf3, cwf5/ecm2, spp42/cwf6, cwf7/spf27, cwf8, cwf9, cwf10, cwf11, cwf12, prp45/cwf13, cwf14, cwf15, cwf16, cwf17, cwf18, cwf19, cwf20, cwf21, cwf22, cwf23, cwf24, cwf25, cwf26, cyp7/cwf27, cwf28, cwf29/ist3, lea1, msl1, prp5/cwf1, prp10, prp12/sap130, prp17, prp22, sap61, sap62, sap114, sap145, slu7, smb1, smd1, smd3, smf1, smg1 and syf2.

It is found in the nucleus. It localises to the cytoplasm. Plays a role in pre-mRNA splicing as a core component of the spliceosomal U1, U2, U4 and U5 small nuclear ribonucleoproteins (snRNPs), the building blocks of the spliceosome. This Schizosaccharomyces pombe (strain 972 / ATCC 24843) (Fission yeast) protein is Small nuclear ribonucleoprotein G (smg1).